We begin with the raw amino-acid sequence, 385 residues long: MWGRLLLWPLVLGFSLSGGTQTPSVYDESGSTGGGDDSTPSILPAPRGYPGQVCANDSDTLELPDSSRALLLGWVPTRLVPALYGLVLVVGLPANGLALWVLATQAPRLPSTMLLMNLAAADLLLALALPPRIAYHLRGQRWPFGEAACRLATAALYGHMYGSVLLLAAVSLDRYLALVHPLRARALRGRRLALGLCMAAWLMAAALALPLTLQRQTFRLARSDRVLCHDALPLDAQASHWQPAFTCLALLGCFLPLLAMLLCYGATLHTLAASGRRYGHALRLTAVVLASAVAFFVPSNLLLLLHYSDPSPSAWGNLYGAYVPSLALSTLNSCVDPFIYYYVSAEFRDKVRAGLFQRSPGDTVASKASAEGGSRGMGTHSSLLQ.

Positions 1 to 17 (MWGRLLLWPLVLGFSLS) are cleaved as a signal peptide. A propeptide spans 18-47 (GGTQTPSVYDESGSTGGGDDSTPSILPAPR) (removed for receptor activation). A disordered region spans residues 21–42 (QTPSVYDESGSTGGGDDSTPSI). Topologically, residues 48–82 (GYPGQVCANDSDTLELPDSSRALLLGWVPTRLVPA) are extracellular. Residue Asn56 is glycosylated (N-linked (GlcNAc...) asparagine). A helical transmembrane segment spans residues 83 to 103 (LYGLVLVVGLPANGLALWVLA). The Cytoplasmic portion of the chain corresponds to 104–108 (TQAPR). A helical membrane pass occupies residues 109 to 129 (LPSTMLLMNLAAADLLLALAL). The Extracellular portion of the chain corresponds to 130 to 151 (PPRIAYHLRGQRWPFGEAACRL). Cys149 and Cys228 are disulfide-bonded. A helical transmembrane segment spans residues 152 to 172 (ATAALYGHMYGSVLLLAAVSL). At 173-192 (DRYLALVHPLRARALRGRRL) the chain is on the cytoplasmic side. The helical transmembrane segment at 193-213 (ALGLCMAAWLMAAALALPLTL) threads the bilayer. Residues 214–247 (QRQTFRLARSDRVLCHDALPLDAQASHWQPAFTC) lie on the Extracellular side of the membrane. Residues 248-268 (LALLGCFLPLLAMLLCYGATL) form a helical membrane-spanning segment. Topologically, residues 269 to 283 (HTLAASGRRYGHALR) are cytoplasmic. The chain crosses the membrane as a helical span at residues 284–304 (LTAVVLASAVAFFVPSNLLLL). Topologically, residues 305–319 (LHYSDPSPSAWGNLY) are extracellular. The helical transmembrane segment at 320 to 343 (GAYVPSLALSTLNSCVDPFIYYYV) threads the bilayer. The Cytoplasmic portion of the chain corresponds to 344–385 (SAEFRDKVRAGLFQRSPGDTVASKASAEGGSRGMGTHSSLLQ). A disordered region spans residues 362-385 (DTVASKASAEGGSRGMGTHSSLLQ).

Belongs to the G-protein coupled receptor 1 family. In terms of processing, a proteolytic cleavage generates a new N-terminus that functions as a tethered ligand. In terms of tissue distribution, widely expressed, with highest levels in lung, pancreas, thyroid, testis and small intestine. Not expressed in brain, kidney, spinal cord and peripheral blood leukocytes. Also detected in platelets.

The protein resides in the cell membrane. With respect to regulation, activated upon interaction by mucunain, a cowhage (Mucuna pruriens) plant cysteine proteinase. Receptor for activated thrombin or trypsin coupled to G proteins that stimulate phosphoinositide hydrolysis. May play a role in platelets activation. The protein is Proteinase-activated receptor 4 (F2RL3) of Homo sapiens (Human).